A 525-amino-acid polypeptide reads, in one-letter code: Averantin hydroxylase (525 aa).

Residues 36–56 form a helical membrane-spanning segment; that stretch reads VLATFVAGIGALLLWTLTTVF. Asn315 carries an N-linked (GlcNAc...) asparagine glycan. Heme is bound at residue Cys462.

This sequence belongs to the cytochrome P450 family. Heme serves as cofactor.

It localises to the membrane. It carries out the reaction (1'S)-averantin + reduced [NADPH--hemoprotein reductase] + O2 = (1'S,5'R)-5'-hydroxyaverantin + oxidized [NADPH--hemoprotein reductase] + H2O. The enzyme catalyses (1'S)-averantin + reduced [NADPH--hemoprotein reductase] + O2 = (1'S,5'S)-5'-hydroxyaverantin + oxidized [NADPH--hemoprotein reductase] + H2O + H(+). It functions in the pathway mycotoxin biosynthesis. Averantin hydroxylase; part of the fragmented gene cluster that mediates the biosynthesis of dothistromin (DOTH), a polyketide toxin very similar in structure to the aflatoxin precursor, versicolorin B. The first step of the pathway is the conversion of acetate to norsolorinic acid (NOR) and requires the fatty acid synthase subunits hexA and hexB, as well as the polyketide synthase pksA. PksA combines a hexanoyl starter unit and 7 malonyl-CoA extender units to synthesize the precursor NOR. The hexanoyl starter unit is provided to the acyl-carrier protein (ACP) domain by the fungal fatty acid synthase hexA/hexB. The second step is the conversion of NOR to averantin (AVN) and requires the norsolorinic acid ketoreductase nor1, which catalyzes the dehydration of norsolorinic acid to form (1'S)-averantin. The cytochrome P450 monooxygenase avnA then catalyzes the hydroxylation of AVN to 5'hydroxyaverantin (HAVN). The next step is performed by adhA that transforms HAVN to averufin (AVF). Averufin might then be converted to hydroxyversicolorone by cypX and avfA. Hydroxyversicolorone is further converted versiconal hemiacetal acetate (VHA) by moxY. VHA is then the substrate for the versiconal hemiacetal acetate esterase est1 to yield versiconal (VAL). Versicolorin B synthase vbsA then converts VAL to versicolorin B (VERB) by closing the bisfuran ring. Then, the activity of the versicolorin B desaturase verB leads to versicolorin A (VERA). DotB, a predicted chloroperoxidase, may perform epoxidation of the A-ring of VERA. Alternatively, a cytochrome P450, such as cypX or avnA could catalyze this step. It is also possible that another, uncharacterized, cytochrome P450 enzyme is responsible for this step. Opening of the epoxide could potentially be achieved by the epoxide hydrolase epoA. However, epoA seems not to be required for DOTH biosynthesis, but other epoxide hydrolases may have the ability to complement this hydrolysis. Alternatively, opening of the epoxide ring could be achieved non-enzymatically. The next step is the deoxygenation of ring A to yield the 5,8-dihydroxyanthraquinone which is most likely catalyzed by the NADPH dehydrogenase encoded by ver1. The last stages of DOTH biosynthesis are proposed to involve hydroxylation of the bisfuran. OrdB and norB might have oxidative roles here. An alternative possibility is that cytochrome P450 monoogenases such as avnA and cypX might perform these steps in addition to previously proposed steps. The protein is Averantin hydroxylase of Dothistroma septosporum (strain NZE10 / CBS 128990) (Red band needle blight fungus).